Reading from the N-terminus, the 957-residue chain is Translation initiation factor IF-2 (957 aa).

Disordered regions lie at residues lysine 34–lysine 282 and serine 311–glycine 367. Positions proline 107–arginine 161 are enriched in pro residues. Basic and acidic residues predominate over residues threonine 163–glycine 188. Over residues proline 209–proline 242 the composition is skewed to pro residues. Composition is skewed to basic and acidic residues over residues leucine 250 to isoleucine 259 and lysine 266 to arginine 275. Residues arginine 444–tyrosine 617 form the tr-type G domain. Residues glycine 453–threonine 460 are G1. Glycine 453–threonine 460 is a binding site for GTP. Residues glycine 478–histidine 482 form a G2 region. The segment at aspartate 503–glycine 506 is G3. Residues aspartate 503–histidine 507 and asparagine 557–aspartate 560 contribute to the GTP site. Residues asparagine 557–aspartate 560 form a G4 region. Residues serine 593–leucine 595 form a G5 region.

The protein belongs to the TRAFAC class translation factor GTPase superfamily. Classic translation factor GTPase family. IF-2 subfamily.

The protein localises to the cytoplasm. One of the essential components for the initiation of protein synthesis. Protects formylmethionyl-tRNA from spontaneous hydrolysis and promotes its binding to the 30S ribosomal subunits. Also involved in the hydrolysis of GTP during the formation of the 70S ribosomal complex. In Thermosynechococcus vestitus (strain NIES-2133 / IAM M-273 / BP-1), this protein is Translation initiation factor IF-2.